The sequence spans 610 residues: UvrABC system protein C (610 aa).

One can recognise a GIY-YIG domain in the interval 16-94; sequence SQPGVYRMYD…IKLYQPRYNV (79 aa). Residues 204 to 239 form the UVR domain; that stretch reads DQVLTQLIARMEKASQDLAFEEAARIRDQIQAVRRV.

This sequence belongs to the UvrC family. In terms of assembly, interacts with UvrB in an incision complex.

The protein localises to the cytoplasm. Its function is as follows. The UvrABC repair system catalyzes the recognition and processing of DNA lesions. UvrC both incises the 5' and 3' sides of the lesion. The N-terminal half is responsible for the 3' incision and the C-terminal half is responsible for the 5' incision. The polypeptide is UvrABC system protein C (Salmonella enteritidis PT4 (strain P125109)).